The chain runs to 409 residues: Immediate early response gene 5-like protein (409 aa).

Disordered stretches follow at residues 168–237 and 312–335; these read QPPH…PSSS and GQEE…GGTP. Positions 184-195 are enriched in pro residues; that stretch reads QPGPAPLPPPAP. Composition is skewed to low complexity over residues 196 to 212 and 220 to 237; these read AALC…CSAP and PPTV…PSSS. The segment covering 313–324 has biased composition (acidic residues); sequence QEEEDDEEEDAG.

It belongs to the IER family.

This is Immediate early response gene 5-like protein (Ier5l) from Rattus norvegicus (Rat).